A 319-amino-acid chain; its full sequence is ATP-dependent 6-phosphofructokinase (319 aa).

Gly11 contacts ATP. An ADP-binding site is contributed by 21–25; the sequence is RAVVR. Residues 72 to 73 and 102 to 105 contribute to the ATP site; these read RC and GDGS. Mg(2+) is bound at residue Asp103. 125–127 is a substrate binding site; that stretch reads TID. Asp127 serves as the catalytic Proton acceptor. An ADP-binding site is contributed by Arg154. Substrate-binding positions include Arg162 and 169-171; that span reads MGR. Residues 185–187, Arg211, and 213–215 each bind ADP; these read GAE and KRH. Substrate-binding positions include Glu222, Arg243, and 249 to 252; that span reads HVQR.

Belongs to the phosphofructokinase type A (PFKA) family. ATP-dependent PFK group I subfamily. Prokaryotic clade 'B1' sub-subfamily. In terms of assembly, homotetramer. Mg(2+) serves as cofactor.

The protein resides in the cytoplasm. It carries out the reaction beta-D-fructose 6-phosphate + ATP = beta-D-fructose 1,6-bisphosphate + ADP + H(+). It functions in the pathway carbohydrate degradation; glycolysis; D-glyceraldehyde 3-phosphate and glycerone phosphate from D-glucose: step 3/4. With respect to regulation, allosterically activated by ADP and other diphosphonucleosides, and allosterically inhibited by phosphoenolpyruvate. Catalyzes the phosphorylation of D-fructose 6-phosphate to fructose 1,6-bisphosphate by ATP, the first committing step of glycolysis. The sequence is that of ATP-dependent 6-phosphofructokinase from Clostridioides difficile (strain 630) (Peptoclostridium difficile).